A 333-amino-acid polypeptide reads, in one-letter code: Trans-1,2-dihydrobenzene-1,2-diol dehydrogenase (333 aa).

The protein belongs to the Gfo/Idh/MocA family. In terms of assembly, homodimer.

The enzyme catalyses (1R,2R)-1,2-dihydrobenzene-1,2-diol + NADP(+) = catechol + NADPH + H(+). It carries out the reaction D-xylose + NADP(+) = D-xylono-1,5-lactone + NADPH + H(+). The polypeptide is Trans-1,2-dihydrobenzene-1,2-diol dehydrogenase (Dhdh) (Mus musculus (Mouse)).